Here is a 446-residue protein sequence, read N- to C-terminus: AP-2 complex subunit mu (446 aa).

Phosphoserine is present on residues Ser-145, Ser-151, and Ser-152. At Thr-157 the chain carries Phosphothreonine. Residues Lys-177–Arg-445 form the MHD domain.

The protein belongs to the adaptor complexes medium subunit family. As to quaternary structure, adaptor protein complex 2 (AP-2) is a heterotetramer composed of two large adaptins (alpha-type subunit apl3 and beta-type subunit apl1), a medium chain (mu-type subunit apm4) and a small adaptin (sigma-type subunit aps2).

It is found in the cell membrane. The protein resides in the membrane. The protein localises to the coated pit. Functionally, component of the adaptor complexes which link clathrin to receptors in coated vesicles. Clathrin-associated protein complexes are believed to interact with the cytoplasmic tails of membrane proteins, leading to their selection and concentration. AP50 is a subunit of the plasma membrane adaptor (Potential). This Schizosaccharomyces pombe (strain 972 / ATCC 24843) (Fission yeast) protein is AP-2 complex subunit mu (apm4).